Reading from the N-terminus, the 243-residue chain is ATP synthase subunit a, chloroplastic (243 aa).

Helical transmembrane passes span 32–52, 91–111, 130–150, 195–215, and 216–236; these read AQVL…ALIA, IPFV…GALI, INTT…AGLN, LVVA…MMFL, and GLFT…AYIG.

This sequence belongs to the ATPase A chain family. F-type ATPases have 2 components, CF(1) - the catalytic core - and CF(0) - the membrane proton channel. CF(1) has five subunits: alpha(3), beta(3), gamma(1), delta(1), epsilon(1). CF(0) has four main subunits: a, b, b' and c.

The protein localises to the plastid. Its subcellular location is the chloroplast thylakoid membrane. Its function is as follows. Key component of the proton channel; it plays a direct role in the translocation of protons across the membrane. The protein is ATP synthase subunit a, chloroplastic of Chaetosphaeridium globosum (Charophycean green alga).